A 141-amino-acid chain; its full sequence is Ribonuclease P protein component (141 aa).

Disordered stretches follow at residues 37–56 (RTEE…VGFT) and 114–141 (RRIT…VNGK). Basic and acidic residues predominate over residues 114–123 (RRITAKGERR).

This sequence belongs to the RnpA family. As to quaternary structure, consists of a catalytic RNA component (M1 or rnpB) and a protein subunit.

It carries out the reaction Endonucleolytic cleavage of RNA, removing 5'-extranucleotides from tRNA precursor.. In terms of biological role, RNaseP catalyzes the removal of the 5'-leader sequence from pre-tRNA to produce the mature 5'-terminus. It can also cleave other RNA substrates such as 4.5S RNA. The protein component plays an auxiliary but essential role in vivo by binding to the 5'-leader sequence and broadening the substrate specificity of the ribozyme. The protein is Ribonuclease P protein component of Brucella suis biovar 1 (strain 1330).